The chain runs to 432 residues: Glutamyl-tRNA reductase (432 aa).

Residues 55 to 58 (TCNR), serine 114, 119 to 121 (ETQ), and glutamine 125 contribute to the substrate site. Residue cysteine 56 is the Nucleophile of the active site. 194 to 199 (GAGEMI) is a binding site for NADP(+).

It belongs to the glutamyl-tRNA reductase family. As to quaternary structure, homodimer.

The catalysed reaction is (S)-4-amino-5-oxopentanoate + tRNA(Glu) + NADP(+) = L-glutamyl-tRNA(Glu) + NADPH + H(+). It participates in porphyrin-containing compound metabolism; protoporphyrin-IX biosynthesis; 5-aminolevulinate from L-glutamyl-tRNA(Glu): step 1/2. Functionally, catalyzes the NADPH-dependent reduction of glutamyl-tRNA(Glu) to glutamate 1-semialdehyde (GSA). This chain is Glutamyl-tRNA reductase, found in Burkholderia multivorans (strain ATCC 17616 / 249).